Consider the following 132-residue polypeptide: Small ribosomal subunit protein uS8 (132 aa).

Belongs to the universal ribosomal protein uS8 family. In terms of assembly, part of the 30S ribosomal subunit. Contacts proteins S5 and S12.

Its function is as follows. One of the primary rRNA binding proteins, it binds directly to 16S rRNA central domain where it helps coordinate assembly of the platform of the 30S subunit. The polypeptide is Small ribosomal subunit protein uS8 (Roseiflexus castenholzii (strain DSM 13941 / HLO8)).